A 364-amino-acid polypeptide reads, in one-letter code: Chorismate synthase (364 aa).

NADP(+) contacts are provided by arginine 48 and arginine 54. FMN-binding positions include 130 to 132, 242 to 243, glycine 287, 302 to 306, and arginine 328; these read RSS, NA, and KPTSS.

It belongs to the chorismate synthase family. Homotetramer. The cofactor is FMNH2.

The enzyme catalyses 5-O-(1-carboxyvinyl)-3-phosphoshikimate = chorismate + phosphate. The protein operates within metabolic intermediate biosynthesis; chorismate biosynthesis; chorismate from D-erythrose 4-phosphate and phosphoenolpyruvate: step 7/7. Its function is as follows. Catalyzes the anti-1,4-elimination of the C-3 phosphate and the C-6 proR hydrogen from 5-enolpyruvylshikimate-3-phosphate (EPSP) to yield chorismate, which is the branch point compound that serves as the starting substrate for the three terminal pathways of aromatic amino acid biosynthesis. This reaction introduces a second double bond into the aromatic ring system. The chain is Chorismate synthase from Allorhizobium ampelinum (strain ATCC BAA-846 / DSM 112012 / S4) (Agrobacterium vitis (strain S4)).